The sequence spans 459 residues: Argininosuccinate lyase (459 aa).

Belongs to the lyase 1 family. Argininosuccinate lyase subfamily.

The protein localises to the cytoplasm. The enzyme catalyses 2-(N(omega)-L-arginino)succinate = fumarate + L-arginine. It participates in amino-acid biosynthesis; L-arginine biosynthesis; L-arginine from L-ornithine and carbamoyl phosphate: step 3/3. In Prochlorococcus marinus (strain MIT 9301), this protein is Argininosuccinate lyase.